A 281-amino-acid polypeptide reads, in one-letter code: Stomatin-4 (281 aa).

A helical transmembrane segment spans residues 28–48; sequence WIITIISYLVVLFTLPLSAFF.

The protein belongs to the band 7/mec-2 family.

It is found in the membrane. This is Stomatin-4 (sto-4) from Caenorhabditis elegans.